The following is an 85-amino-acid chain: Beta-insect depressant toxin LqhIT2 (85 aa).

The first 21 residues, 1-21, serve as a signal peptide directing secretion; the sequence is MKLLLLLIVSASMLIESLVNA. The 61-residue stretch at 22–82 folds into the LCN-type CS-alpha/beta domain; sequence DGYIKRRDGC…TWKSETNTCG (61 aa). 4 disulfide bridges follow: Cys31–Cys81, Cys35–Cys56, Cys42–Cys63, and Cys46–Cys65. Residue Gly82 is modified to Glycine amide.

It belongs to the long (4 C-C) scorpion toxin superfamily. Sodium channel inhibitor family. Beta subfamily. In terms of tissue distribution, expressed by the venom gland.

Its subcellular location is the secreted. In terms of biological role, depressant insect beta-toxins cause a transient contraction paralysis followed by a slow flaccid paralysis. They bind voltage-independently at site-4 of sodium channels (Nav) and shift the voltage of activation toward more negative potentials thereby affecting sodium channel activation and promoting spontaneous and repetitive firing. This toxin is active only on insects. The sequence is that of Beta-insect depressant toxin LqhIT2 from Leiurus hebraeus (Hebrew deathstalker scorpion).